The primary structure comprises 336 residues: Phospho-N-acetylmuramoyl-pentapeptide-transferase (336 aa).

10 helical membrane passes run 3 to 23 (LTLIAAIISFMVSAFTMPYFI), 53 to 73 (GGTVFLLVATAVSLLVNLFSI), 78 to 98 (SLALISGILSIVVIYGIIGFL), 118 to 138 (LALQLAGGLMFYFLHVSPSGI), 143 to 163 (VFGYQLSLGIFYLFFVLFWVV), 174 to 194 (GIDGLASISVVISLVTYGVIA), 200 to 220 (FDVLLLIGTMIGALLGFFCFN), 226 to 246 (VFMGDVGSLALGAMLAAISIA), 251 to 271 (WTLLIIGIVYVLETSSVMLQV), and 316 to 336 (AFLWGVGSLASLLVLAILYVF).

This sequence belongs to the glycosyltransferase 4 family. MraY subfamily. It depends on Mg(2+) as a cofactor.

It is found in the cell membrane. It carries out the reaction UDP-N-acetyl-alpha-D-muramoyl-L-alanyl-gamma-D-glutamyl-L-lysyl-D-alanyl-D-alanine + di-trans,octa-cis-undecaprenyl phosphate = Mur2Ac(oyl-L-Ala-gamma-D-Glu-L-Lys-D-Ala-D-Ala)-di-trans,octa-cis-undecaprenyl diphosphate + UMP. It participates in cell wall biogenesis; peptidoglycan biosynthesis. In terms of biological role, catalyzes the initial step of the lipid cycle reactions in the biosynthesis of the cell wall peptidoglycan: transfers peptidoglycan precursor phospho-MurNAc-pentapeptide from UDP-MurNAc-pentapeptide onto the lipid carrier undecaprenyl phosphate, yielding undecaprenyl-pyrophosphoryl-MurNAc-pentapeptide, known as lipid I. This Streptococcus pyogenes serotype M5 (strain Manfredo) protein is Phospho-N-acetylmuramoyl-pentapeptide-transferase.